Consider the following 838-residue polypeptide: Major vault protein (838 aa).

MVP repeat units lie at residues 13–52 (VHIL…VVPP), 53–114 (RFYC…FKLK), 118–170 (VNTG…HIIS), 171–223 (PNTA…ITLT), 224–278 (DTEA…IVLN), 280–328 (KEYC…NVVS), 329–380 (KDQA…IALD), and 381–433 (KNEG…CMSE).

In terms of assembly, the vault ribonucleoprotein particle is a huge (400 A x 670 A) cage structure of 12.9 MDa. It consists of a dimer of half-vaults, with each half-vault comprising 39 identical major vault protein (MVP) chains, PARP4 and one or more vault RNAs (vRNAs).

The protein resides in the cytoplasm. It is found in the nucleus. Its function is as follows. Required for normal vault structure. Vaults are multi-subunit structures that may act as scaffolds for proteins involved in signal transduction. Vaults may also play a role in nucleo-cytoplasmic transport. This Trypanosoma cruzi (strain CL Brener) protein is Major vault protein.